The chain runs to 119 residues: Hydrogenase maturation factor HypA (119 aa).

A Ni(2+)-binding site is contributed by histidine 2. 4 residues coordinate Zn(2+): cysteine 73, cysteine 76, cysteine 89, and cysteine 92.

Belongs to the HypA/HybF family.

Functionally, involved in the maturation of [NiFe] hydrogenases. Required for nickel insertion into the metal center of the hydrogenase. The protein is Hydrogenase maturation factor HypA of Dehalococcoides mccartyi (strain CBDB1).